A 188-amino-acid chain; its full sequence is Insulin-like peptide INSL6 (188 aa).

An N-terminal signal peptide occupies residues 1 to 22 (MKQLCCSCLLWLGLLLAPFSQE). 3 disulfides stabilise this stretch: Cys33-Cys169, Cys45-Cys182, and Cys168-Cys173. A propeptide spans 53 to 158 (FSMEEQSPMT…SGLFWGNHPQ (106 aa)) (connecting peptide).

This sequence belongs to the insulin family. As to expression, testis and prostate specific.

The protein localises to the secreted. Functionally, may have a role in sperm development and fertilization. This Rattus norvegicus (Rat) protein is Insulin-like peptide INSL6 (Insl6).